We begin with the raw amino-acid sequence, 501 residues long: Cytochrome P450 76M5 (501 aa).

A helical transmembrane segment spans residues E5–M25. A heme-binding site is contributed by C443.

It belongs to the cytochrome P450 family. Heme serves as cofactor.

The protein resides in the membrane. The catalysed reaction is ent-sandaracopimaradien-3beta-ol + reduced [NADPH--hemoprotein reductase] + O2 = oryzalexin E + oxidized [NADPH--hemoprotein reductase] + H2O + H(+). Enzyme of the diterpenoid metabolism involved in the biosynthesis of the oryzalexin class of phytoalexins. Hydroxylates ent-sandaracopimaradien. The polypeptide is Cytochrome P450 76M5 (Oryza sativa subsp. japonica (Rice)).